The chain runs to 821 residues: Cation/H(+) antiporter 15 (821 aa).

Helical transmembrane passes span 37–57 (LPLFVLQLTLVVVVTRFFVFI), 65–82 (RVISEILGGIVLGPSVLG), 97–117 (VMVLETMANVGLLYFLFLVGV), 131–151 (ALTIAIGGMVLPFLIGAAFSF), 166–186 (ILFLGVALSVTAFPVLARILA), 200–220 (MSAALVNDMFAWILLALAIAL), 228–248 (FASLWVMISSAVFIAVCVFVV), 268–288 (FHICLILTGVMISGFITDAIG), 292–312 (VFGAFVFGLVIPNGPLGLTLI), 318–338 (FVSGLLLPLFFAISGLKTNIA), 350–370 (FLVIFLACAGKVIGTVIVAFF), 378–398 (GITLGLLLNTKGLVEMIVLNV), and 410–430 (FATMVLVALVMTGVITPIVTI). Residues 800–821 (DFPESPVHSHETKVTYGLENPR) form a disordered region.

Belongs to the monovalent cation:proton antiporter 2 (CPA2) transporter (TC 2.A.37) family. CHX (TC 2.A.37.4) subfamily. As to expression, specifically expressed in pollen.

It is found in the membrane. Its function is as follows. May operate as a cation/H(+) antiporter. The protein is Cation/H(+) antiporter 15 (CHX15) of Arabidopsis thaliana (Mouse-ear cress).